The primary structure comprises 333 residues: Glycerol-3-phosphate dehydrogenase [NAD(P)+] (333 aa).

The NADPH site is built by S10, W11, H31, R32, and K105. Sn-glycerol 3-phosphate is bound by residues K105, G136, and S138. Residue A140 participates in NADPH binding. Residues K191, D244, S254, R255, and N256 each coordinate sn-glycerol 3-phosphate. K191 serves as the catalytic Proton acceptor. Residue R255 participates in NADPH binding. Positions 279 and 281 each coordinate NADPH.

It belongs to the NAD-dependent glycerol-3-phosphate dehydrogenase family.

It localises to the cytoplasm. The catalysed reaction is sn-glycerol 3-phosphate + NAD(+) = dihydroxyacetone phosphate + NADH + H(+). It catalyses the reaction sn-glycerol 3-phosphate + NADP(+) = dihydroxyacetone phosphate + NADPH + H(+). It participates in membrane lipid metabolism; glycerophospholipid metabolism. In terms of biological role, catalyzes the reduction of the glycolytic intermediate dihydroxyacetone phosphate (DHAP) to sn-glycerol 3-phosphate (G3P), the key precursor for phospholipid synthesis. The polypeptide is Glycerol-3-phosphate dehydrogenase [NAD(P)+] (Chlorobium chlorochromatii (strain CaD3)).